We begin with the raw amino-acid sequence, 390 residues long: MGTVEKSSNNDASVTDDIRSAEYYHGMVPRQDAEGFLKREGDFLVRKTEQMPGKVVLAMSVRVTDELCRHFMLNMDPTSNKFYFEHTHQESTISELINWHMTTKTPISAASGAKIRRPMERSPWLINHDSIVANKKLGEGAFGDVFIAELDQGGKQEVAVKTMRAEATREARLRFMKEARLMRKYQHKHVVKLIGVAIHEHPLMIVMEYCPNGSLLSHLKKNKVSLIEKLRFTTEAADGIAYLERSKCIHRDIAARNCLLSAKNELKISDFGMSDNKDEIKDETLEKVPIKWLAPETMQEKVYTHKTDIWTFGVLVWEIYSDGAEPYPGLTKIQTRAKIVVNDYRMKMPDGTHPTVADVVTGTCWQKNPEKRSTMDSIHKKLREFYESKK.

The 97-residue stretch at 23–119 folds into the SH2 domain; sequence YYHGMVPRQD…ASGAKIRRPM (97 aa). The region spanning 131–386 is the Protein kinase domain; the sequence is IVANKKLGEG…SIHKKLREFY (256 aa). Residues 137–145 and Lys-161 each bind ATP; that span reads LGEGAFGDV. Asp-252 functions as the Proton acceptor in the catalytic mechanism.

Belongs to the protein kinase superfamily. Tyr protein kinase family. Fes/fps subfamily. In terms of assembly, interacts with hmp-2. Mn(2+) is required as a cofactor.

Its subcellular location is the nucleus. It localises to the cytoplasm. The protein localises to the cell junction. It is found in the cell membrane. It catalyses the reaction L-tyrosyl-[protein] + ATP = O-phospho-L-tyrosyl-[protein] + ADP + H(+). In terms of biological role, non-receptor tyrosine-protein kinase which plays a role in morphogenesis by regulating the epidermal enclosure of the embryo, independently of its kinase activity. Prevents hyperactivation of the Wnt signaling pathway during endoderm development, probably by preventing hmp-2 nuclear translocation. The chain is Fer-related kinase 1 from Caenorhabditis elegans.